We begin with the raw amino-acid sequence, 331 residues long: Cathepsin S (331 aa).

Residues Met1–Ala16 form the signal peptide. Positions His17–Lys114 are cleaved as a propeptide — activation peptide. Asn104 carries N-linked (GlcNAc...) asparagine glycosylation. Intrachain disulfides connect Cys126–Cys224, Cys136–Cys180, Cys170–Cys213, and Cys272–Cys320. The active site involves Cys139. Active-site residues include His278 and Asn298.

This sequence belongs to the peptidase C1 family. In terms of assembly, monomer.

It localises to the lysosome. The protein localises to the secreted. Its subcellular location is the cytoplasmic vesicle. It is found in the phagosome. The catalysed reaction is Similar to cathepsin L, but with much less activity on Z-Phe-Arg-|-NHMec, and more activity on the Z-Val-Val-Arg-|-Xaa compound.. Its function is as follows. Thiol protease. Key protease responsible for the removal of the invariant chain from MHC class II molecules and MHC class II antigen presentation. The bond-specificity of this proteinase is in part similar to the specificities of cathepsin L. The chain is Cathepsin S (CTSS) from Bos taurus (Bovine).